A 123-amino-acid chain; its full sequence is UPF0102 protein PSPPH_4120 (123 aa).

Belongs to the UPF0102 family.

This is UPF0102 protein PSPPH_4120 from Pseudomonas savastanoi pv. phaseolicola (strain 1448A / Race 6) (Pseudomonas syringae pv. phaseolicola (strain 1448A / Race 6)).